The following is a 478-amino-acid chain: Zinc finger protein 410 (478 aa).

Residues 187–213 (NAKTSSNGENVHLGSGDGQSKDSGPLP) are disordered. C2H2-type zinc fingers lie at residues 219 to 243 (LKCT…LKTH), 249 to 273 (FICP…MRTH), 279 to 303 (FMCH…RRIH), 309 to 333 (FLCE…LVVH), and 339 to 362 (HQCQ…RKHH). The Zn(2+) site is built by C221, C226, H239, H243, C251, C256, H269, H273, C281, C286, H299, H303, C311, C316, H329, H333, C341, C344, H357, and H361.

In terms of assembly, interacts with CDKN2A/p14ARF. Post-translationally, sumoylated. Sumoylation increases its half-life, possibly by blocking ubiquitin-mediated degradation. O-glycosylated. O-GlcNAcylation may occur in response to increasing glucose levels and affect transcription factor activity. In terms of tissue distribution, widely expressed.

It is found in the nucleus. The protein resides in the chromosome. Transcription factor that binds to the sequence motif 5'-CATCCCATAATA-3', and is specifically required to silence expression of fetal hemoglobin in adult erythroid cells. Prevents expression of fetal hemoglobin genes HBG1 and HBG2 through CHD4: acts as a direct transcriptional activator of CHD4, a central component of the NuRD complex that represses transcription of fetal hemoglobin genes HBG1 and HBG2 in erythroid cells. May also activate transcription of matrix-remodeling genes such as MMP1 during fibroblast senescence. May activate transcription of the gap junction gene GJC1, perhaps in response to increasing glucose. However, recent studies suggest that ZNF410 is dedicated to regulate expression of a single gene: CHD4. The polypeptide is Zinc finger protein 410 (Homo sapiens (Human)).